Consider the following 124-residue polypeptide: UPF0102 protein tll1737 (124 aa).

Belongs to the UPF0102 family.

The polypeptide is UPF0102 protein tll1737 (Thermosynechococcus vestitus (strain NIES-2133 / IAM M-273 / BP-1)).